We begin with the raw amino-acid sequence, 474 residues long: Aspartic-type endopeptidase ctsD (474 aa).

The signal sequence occupies residues 1–19; it reads MHLLQCLLSTISLASTVTA. A Peptidase A1 domain is found at 106–413; the sequence is YFATVRVGSQ…DYDNHRIGFA (308 aa). The active site involves aspartate 124. N-linked (GlcNAc...) asparagine glycosylation is found at asparagine 189, asparagine 197, asparagine 275, and asparagine 301. The active site involves aspartate 307. N-linked (GlcNAc...) asparagine glycans are attached at residues asparagine 338, asparagine 344, and asparagine 414. A lipid anchor (GPI-anchor amidated serine) is attached at serine 452. Positions 453–474 are cleaved as a propeptide — removed in mature form; it reads ASIVSRFVHWPFIFALLCMVLV.

It belongs to the peptidase A1 family.

Its subcellular location is the cell membrane. Secreted aspartic-type endopeptidase which is secreted and contributes to virulence. This Aspergillus fumigatus (strain ATCC MYA-4609 / CBS 101355 / FGSC A1100 / Af293) (Neosartorya fumigata) protein is Aspartic-type endopeptidase ctsD (ctsD).